The primary structure comprises 289 residues: Probable endonuclease 4 (289 aa).

The Zn(2+) site is built by H74, H115, E150, D184, H187, H218, D231, H233, and E263.

The protein belongs to the AP endonuclease 2 family. Zn(2+) is required as a cofactor.

It catalyses the reaction Endonucleolytic cleavage to 5'-phosphooligonucleotide end-products.. In terms of biological role, endonuclease IV plays a role in DNA repair. It cleaves phosphodiester bonds at apurinic or apyrimidinic (AP) sites, generating a 3'-hydroxyl group and a 5'-terminal sugar phosphate. This chain is Probable endonuclease 4, found in Mycoplasma mycoides subsp. mycoides SC (strain CCUG 32753 / NCTC 10114 / PG1).